Reading from the N-terminus, the 305-residue chain is Glutaminase (305 aa).

Residues serine 61, asparagine 113, glutamate 158, asparagine 165, tyrosine 189, tyrosine 241, and valine 259 each contribute to the substrate site.

This sequence belongs to the glutaminase family. Homotetramer.

The enzyme catalyses L-glutamine + H2O = L-glutamate + NH4(+). The chain is Glutaminase from Clostridium botulinum (strain ATCC 19397 / Type A).